Reading from the N-terminus, the 888-residue chain is Alanine--tRNA ligase (888 aa).

The Zn(2+) site is built by His573, His577, Cys676, and His680.

Belongs to the class-II aminoacyl-tRNA synthetase family. The cofactor is Zn(2+).

The protein resides in the cytoplasm. It catalyses the reaction tRNA(Ala) + L-alanine + ATP = L-alanyl-tRNA(Ala) + AMP + diphosphate. Catalyzes the attachment of alanine to tRNA(Ala) in a two-step reaction: alanine is first activated by ATP to form Ala-AMP and then transferred to the acceptor end of tRNA(Ala). Also edits incorrectly charged Ser-tRNA(Ala) and Gly-tRNA(Ala) via its editing domain. This is Alanine--tRNA ligase from Corynebacterium glutamicum (strain ATCC 13032 / DSM 20300 / JCM 1318 / BCRC 11384 / CCUG 27702 / LMG 3730 / NBRC 12168 / NCIMB 10025 / NRRL B-2784 / 534).